A 147-amino-acid polypeptide reads, in one-letter code: Allograft inflammatory factor 1 (147 aa).

At Ser2 the chain carries N-acetylserine. N6-acetyllysine is present on Lys11. Residue Ser39 is modified to Phosphoserine. One can recognise an EF-hand 1 domain in the interval 45–80 (SKLEAFKKKYMEFDLNEDGGIDIMSLKRMMEKLGVP). Ca(2+) contacts are provided by Asp58, Asn60, and Asp62. An EF-hand 2; degenerate domain is found at 81–115 (KTHLELKKLIMEVSSGPGETFSYSDFLKMMLGKRS). The interval 128–147 (AREQEKPTGLPAKKAISELP) is disordered.

Phosphorylated on serine residues.

The protein resides in the cytoplasm. It is found in the cytoskeleton. It localises to the cell projection. Its subcellular location is the ruffle membrane. The protein localises to the phagocytic cup. Functionally, may play a role in macrophage activation and function. This is Allograft inflammatory factor 1 (AIF1) from Bos taurus (Bovine).